The sequence spans 298 residues: Enoyl-CoA hydratase AFT6-1 (298 aa).

The segment at 1-39 (MTYSTTKSVAMNPDEDAPPSDINSSGRLMSHSEVEPRGN) is disordered.

The protein belongs to the enoyl-CoA hydratase/isomerase family.

The enzyme catalyses a (3S)-3-hydroxyacyl-CoA = a (2E)-enoyl-CoA + H2O. It catalyses the reaction a 4-saturated-(3S)-3-hydroxyacyl-CoA = a (3E)-enoyl-CoA + H2O. It functions in the pathway mycotoxin biosynthesis. Its function is as follows. Enoyl-CoA hydratase; part of the gene clusters that mediate the biosynthesis of the host-selective toxins (HSTs) AF-toxins responsible for Alternaria black spot of strawberry disease by the strawberry pathotype. AF-toxin I and III are valine derivatives of 2,3-dyhydroxy-isovaleric acid and 2-hydroxy-isovaleric acid respectively, while AF II is an isoleucine derivative of 2-hydroxy-valeric acid. These derivatives are bound to a 9,10-epoxy-8-hydroxy-9-methyl-decatrienoic acid (EDA) moiety. On cellular level, AF-toxin affects plasma membrane of susceptible cells and cause a sudden increase in loss of K(+) after a few minutes of toxin treatment. The aldo-keto reductase AFTS1 catalyzes the conversion of 2-keto-isovaleric acid (2-KIV) to 2-hydroxy-isovaleric acid (2-HIV) by reduction of its ketone to an alcohol. The acyl-CoA ligase AFT1, the hydrolase AFT2 and the enoyl-CoA hydratases AFT3 and AFT6, but also the polyketide synthase AFT9, the acyl-CoA dehydrogenase AFT10, the cytochrome P450 monooxygenase AFT11 and the oxidoreductase AFT12 are all involved in the biosynthesis of the AK-, AF- and ACT-toxin common EDA structural moiety. The exact function of each enzyme, and of additional enzymes identified within the AF-toxin clusters have still to be determined. This is Enoyl-CoA hydratase AFT6-1 from Alternaria alternata (Alternaria rot fungus).